The primary structure comprises 264 residues: ECF RNA polymerase sigma factor BldN (264 aa).

Residues 1 to 87 (MYPHVGVDAS…PAADSDSARM (87 aa)) are not required for transcription in vitro. Positions 64 to 83 (RSSSSGAAATTHRRPAADSD) are disordered. Positions 105–172 (LYDQYSDTVY…LVADHFKSSR (68 aa)) are sigma-70 factor domain-2. A Polymerase core binding motif is present at residues 129 to 132 (DLTS). Positions 204–255 (ALLDAVRRLNPQQQECVTLRFLQGLSVAETARVMGKNEGAIKTLQYRAVRTL) are sigma-70 factor domain-4.

This sequence belongs to the sigma-70 factor family. ECF subfamily. Two forms of protein exist; a 35 kDa form in early growth and a 28 kDa form seen in later stages (at protein level). In liquid culture the larger form accumulates to higher level than on solid media. The shorter form results from processing just upstream of Met-87; the exact position is unknown. There are 4 possible start codons; mutation of the first prevents protein production while mutation of the other 3 (Val-44, Met-87 and Met-88) permits production of both forms. Introduction of stop codons between the first and second, or second and third possible start codons also prevents protein production, corroborating that the annotated start codon is the correct one.

Its function is as follows. Sigma factors are initiation factors that promote the attachment of RNA polymerase to specific initiation sites and are then released. Extracytoplasmic function (ECF) sigma factors are usually held in an inactive form by an anti-sigma factor until released. ECF sigma factor involved in aerial mycelium formation, required for translation from the bldMp1 promoter. Expressed as a preprotein; processing and accumulation of the mature protein starts as aerial mycelium formation and sporulation commence. Activates expression of about 17 genes, including those for rdlA and most of the chaplins (chpA to chpH); chaplin activation is indirect. The protein is ECF RNA polymerase sigma factor BldN of Streptomyces coelicolor (strain ATCC BAA-471 / A3(2) / M145).